Here is a 431-residue protein sequence, read N- to C-terminus: MSLWPNRSRNWRVHCDCRGFNLDRHVSEINERILEGDAAVFTADEIKDMVRDGDVPSADEVDVVTTATCGVMSGTAAVMHLRVSEPGSFRKAASVELNGIPAYPGPCPNENLGSVDLFIYGTGHSREDPDYGGGFLFRDLLLGSEVEVRVTSVEGRVVESTVTMDDIETARIVGTRMAFRNYTALVNPGETPVKSIFNAFEMPENCGGLSFSGCGDINPLENDPSMETVHQGTGVLLNGARAIVLGEGTRSSPIKPNLMLSGDLHDMKPRYIGGFRTAAGPEIFNTVAVPVPVTSERVLENLMVLNSDIKLPVADVRDRSRVITEITYEDVWSGDVRPVHHPERCTDCAVCLAARRCPTHAIDNGLDLDRCFGCGVCAWSCPSGAYEMDTGTVRIGELAVPIICRQSDRLRARELSLELKKLIENGDFLMG.

2 4Fe-4S ferredoxin-type domains span residues 336–367 (VRPV…NGLD) and 362–391 (IDNG…MDTG).

This is an uncharacterized protein from Methanothermobacter thermautotrophicus (strain ATCC 29096 / DSM 1053 / JCM 10044 / NBRC 100330 / Delta H) (Methanobacterium thermoautotrophicum).